Consider the following 209-residue polypeptide: Octanoyltransferase (209 aa).

The BPL/LPL catalytic domain occupies 30–209 (DHEPEIIYLV…IQTEFNKIFK (180 aa)). Residues 69–76 (RGGKFTFH), 143–145 (AIG), and 156–158 (GVA) contribute to the substrate site. Cys-174 functions as the Acyl-thioester intermediate in the catalytic mechanism.

The protein belongs to the LipB family.

Its subcellular location is the cytoplasm. It carries out the reaction octanoyl-[ACP] + L-lysyl-[protein] = N(6)-octanoyl-L-lysyl-[protein] + holo-[ACP] + H(+). The protein operates within protein modification; protein lipoylation via endogenous pathway; protein N(6)-(lipoyl)lysine from octanoyl-[acyl-carrier-protein]: step 1/2. Functionally, catalyzes the transfer of endogenously produced octanoic acid from octanoyl-acyl-carrier-protein onto the lipoyl domains of lipoate-dependent enzymes. Lipoyl-ACP can also act as a substrate although octanoyl-ACP is likely to be the physiological substrate. In Rickettsia africae (strain ESF-5), this protein is Octanoyltransferase.